The primary structure comprises 410 residues: MLCIGITGGIGAGKSLLSSTFSQCGGIVVDGDVLAREVVQPGTKGLSSLVDAFGQDILLPGGALDRRALAVKAFRDDAARNVLNGIVHPLVANRRAEIIAAISEDAVVVEDIPLLVESGMAHLFPLVVVVHADVELRVRRLVEQRGVAETDARARIAAQASDEERRAVADVWLDNSSTPEVLVQRARDLWYHRILPFAYNLSQRQAVYAPAGLVTSDPIWLGQAKRIVARLKTTCGHKALRVDHIGSTAVPHYPGFPDFQAKDIIDIQITVESLAMADELADPLLSAGYPRLEHVTGDAAKTNARSTVDRYEHSSDPNLWHKRFHASADPGRPTYVHIRVAGWPNQQFGLLFVDWLKANPGVRADYLDVKRTADRLAAGDMGRYADAKEPWLLDAYRRAWEWADSTGWRL.

A DPCK domain is found at Cys-3–Leu-201. Position 11–16 (Gly-11–Leu-16) interacts with ATP. Residues Pro-196–Leu-410 form a UPF0157 region.

In the N-terminal section; belongs to the CoaE family. The protein in the C-terminal section; belongs to the UPF0157 (GrpB) family.

It localises to the cytoplasm. It catalyses the reaction 3'-dephospho-CoA + ATP = ADP + CoA + H(+). The protein operates within cofactor biosynthesis; coenzyme A biosynthesis; CoA from (R)-pantothenate: step 5/5. Its function is as follows. Catalyzes the phosphorylation of the 3'-hydroxyl group of dephosphocoenzyme A to form coenzyme A. The chain is Dephospho-CoA kinase from Mycobacterium leprae (strain TN).